The primary structure comprises 494 residues: Protein DETOXIFICATION 23 (494 aa).

The disordered stretch occupies residues Met1–Asp25. 12 helical membrane-spanning segments follow: residues Leu40–Ile60, Ala74–Met94, Ile123–Leu143, Ile158–Met178, Ile188–Val208, Leu223–Thr243, Gly268–Leu288, Ala297–Ala317, Met340–Leu360, Leu384–Gly404, Leu416–Leu436, and Val441–Met461.

Belongs to the multi antimicrobial extrusion (MATE) (TC 2.A.66.1) family.

It is found in the membrane. This is Protein DETOXIFICATION 23 from Arabidopsis thaliana (Mouse-ear cress).